Consider the following 306-residue polypeptide: Aspartate carbamoyltransferase catalytic subunit (306 aa).

Carbamoyl phosphate-binding residues include Arg55 and Thr56. Lys84 lines the L-aspartate pocket. Residues Arg105, His133, and Gln136 each coordinate carbamoyl phosphate. Arg166 and Arg227 together coordinate L-aspartate. Positions 265 and 266 each coordinate carbamoyl phosphate.

This sequence belongs to the aspartate/ornithine carbamoyltransferase superfamily. ATCase family. In terms of assembly, heterododecamer (2C3:3R2) of six catalytic PyrB chains organized as two trimers (C3), and six regulatory PyrI chains organized as three dimers (R2).

It carries out the reaction carbamoyl phosphate + L-aspartate = N-carbamoyl-L-aspartate + phosphate + H(+). It participates in pyrimidine metabolism; UMP biosynthesis via de novo pathway; (S)-dihydroorotate from bicarbonate: step 2/3. In terms of biological role, catalyzes the condensation of carbamoyl phosphate and aspartate to form carbamoyl aspartate and inorganic phosphate, the committed step in the de novo pyrimidine nucleotide biosynthesis pathway. This is Aspartate carbamoyltransferase catalytic subunit from Neisseria meningitidis serogroup C (strain 053442).